Reading from the N-terminus, the 511-residue chain is 2-isopropylmalate synthase (511 aa).

Residues 5–267 (LIVFDTTLRD…DTRIDATQIV (263 aa)) form the Pyruvate carboxyltransferase domain. 4 residues coordinate Mn(2+): aspartate 14, histidine 202, histidine 204, and asparagine 238. Positions 393-511 (RLVASRFHSE…SKLERLNPQL (119 aa)) are regulatory domain.

The protein belongs to the alpha-IPM synthase/homocitrate synthase family. LeuA type 1 subfamily. In terms of assembly, homodimer. Requires Mn(2+) as cofactor.

The protein resides in the cytoplasm. It carries out the reaction 3-methyl-2-oxobutanoate + acetyl-CoA + H2O = (2S)-2-isopropylmalate + CoA + H(+). It functions in the pathway amino-acid biosynthesis; L-leucine biosynthesis; L-leucine from 3-methyl-2-oxobutanoate: step 1/4. Functionally, catalyzes the condensation of the acetyl group of acetyl-CoA with 3-methyl-2-oxobutanoate (2-ketoisovalerate) to form 3-carboxy-3-hydroxy-4-methylpentanoate (2-isopropylmalate). The chain is 2-isopropylmalate synthase from Aromatoleum aromaticum (strain DSM 19018 / LMG 30748 / EbN1) (Azoarcus sp. (strain EbN1)).